The sequence spans 124 residues: MDKDRIVGSAKEFAGRAEGAVGDLAGDAQTQASGKAREAAGTVQNLYGQAKDAVREASETAAGYAKDAYDNSGETFRDGSQAIARKVQDNPLGALLVAGGIGFALALLMSRPARRPPPRWRYYG.

It belongs to the UPF0337 (CsbD) family.

This Bradyrhizobium diazoefficiens (strain JCM 10833 / BCRC 13528 / IAM 13628 / NBRC 14792 / USDA 110) protein is UPF0337 protein blr1496.